The primary structure comprises 1042 residues: Ubiquitin carboxyl-terminal hydrolase 38 (1042 aa).

The USP domain occupies 445 to 949; sequence TGLINLGNTC…TAYVLLYKKQ (505 aa). Cysteine 454 acts as the Nucleophile in catalysis. Catalysis depends on histidine 857, which acts as the Proton acceptor.

The protein belongs to the peptidase C19 family. In terms of assembly, interacts with isoform 1 of FBXW7; this interaction prevents FBXW7-mediated degradation of MYC.

It is found in the cytoplasm. Its subcellular location is the nucleus. The catalysed reaction is Thiol-dependent hydrolysis of ester, thioester, amide, peptide and isopeptide bonds formed by the C-terminal Gly of ubiquitin (a 76-residue protein attached to proteins as an intracellular targeting signal).. Its function is as follows. Deubiquitinating enzyme that plays a role in various cellular processes, including DNA repair, cell cycle regulation, and immune response. Plays a role in the inhibition of type I interferon signaling by mediating the 'Lys-33' to 'Lys-48' ubiquitination transition of TBK1 leading to its degradation. Cleaves the ubiquitin chain from the histone demethylase LSD1/KDM1A and prevents it from degradation by the 26S proteasome, thus maintaining LSD1 protein level in cells. Plays a role in the DNA damage response by regulating the deacetylase activity of HDAC1. Mechanistically, removes the 'Lys-63'-linked ubiquitin chain promoting the deacetylase activity of HDAC1 in response to DNA damage. Also acts as a specific deubiquitinase of histone deacetylase 3/HDAC3 and cleaves its 'Lys-63'-linked ubiquitin chains to lower its histone deacetylase activity. Regulates MYC levels and cell proliferation via antagonizing ubiquitin E3 ligase FBXW7 thereby preventing MYC 'Lys-48'-linked ubiquitination and degradation. Participates in antiviral response by removing both 'Lys-48'-linked and 'Lys-63'-linked polyubiquitination of Zika virus envelope protein E. Constitutively associated with IL-33R/IL1RL1, deconjugates its 'Lys-27'-linked polyubiquitination resulting in its autophagic degradation. The protein is Ubiquitin carboxyl-terminal hydrolase 38 (Usp38) of Mus musculus (Mouse).